The sequence spans 79 residues: Large ribosomal subunit protein uL24 (79 aa).

The protein belongs to the universal ribosomal protein uL24 family. In terms of assembly, part of the 50S ribosomal subunit.

Functionally, one of two assembly initiator proteins, it binds directly to the 5'-end of the 23S rRNA, where it nucleates assembly of the 50S subunit. Its function is as follows. One of the proteins that surrounds the polypeptide exit tunnel on the outside of the subunit. The sequence is that of Large ribosomal subunit protein uL24 from Aliarcobacter butzleri (strain RM4018) (Arcobacter butzleri).